A 399-amino-acid chain; its full sequence is Homeobox protein ceh-39 (399 aa).

Disordered stretches follow at residues 32 to 91 (PEPA…GDTE) and 158 to 187 (AKKS…RPAS). Positions 60–79 (SSMCGSSSSSSSSSYSSGSS) are enriched in low complexity. Positions 205-291 (NRQIGDDEEL…VRRALCFMKK (87 aa)) form a DNA-binding region, CUT. Residues 315 to 374 (SDERIRRFTFTQTQLDSLHTVFQQQDRPNREMQQALSATLKLNRSTVGNFFMNARRRLPK) constitute a DNA-binding region (homeobox).

Belongs to the CUT homeobox family. In terms of tissue distribution, expressed in hermaphrodite gonads.

It localises to the nucleus. The protein localises to the chromosome. Its function is as follows. Transcriptional regulator which is involved in the sex determination and X chromosome dosage compensation pathways. Directly binds to 5'-ATTGAT-3' sites in the promoter of sex-determining factor xol-1 to negatively regulate its expression and promote hermaphrodite development. Associates with condensed DNA during mitosis. This is Homeobox protein ceh-39 from Caenorhabditis elegans.